Consider the following 126-residue polypeptide: Probable flagellum biosynthesis repressor protein FlbT (126 aa).

Belongs to the FlbT family.

Functionally, has a post-transcriptional repressor function in flagellum biogenesis. Associates with the 5'-UTR of fljK mRNA and promotes its degradation. The protein is Probable flagellum biosynthesis repressor protein FlbT of Rhodopseudomonas palustris (strain ATCC BAA-98 / CGA009).